A 209-amino-acid polypeptide reads, in one-letter code: Uracil phosphoribosyltransferase (209 aa).

5-phospho-alpha-D-ribose 1-diphosphate contacts are provided by residues arginine 79, arginine 104, and 131-139 (DPMLATGNS). Uracil-binding positions include isoleucine 194 and 199-201 (GDA). Residue aspartate 200 coordinates 5-phospho-alpha-D-ribose 1-diphosphate.

Belongs to the UPRTase family. It depends on Mg(2+) as a cofactor.

It carries out the reaction UMP + diphosphate = 5-phospho-alpha-D-ribose 1-diphosphate + uracil. Its pathway is pyrimidine metabolism; UMP biosynthesis via salvage pathway; UMP from uracil: step 1/1. Allosterically activated by GTP. Functionally, catalyzes the conversion of uracil and 5-phospho-alpha-D-ribose 1-diphosphate (PRPP) to UMP and diphosphate. The protein is Uracil phosphoribosyltransferase of Variovorax paradoxus (strain S110).